Here is a 435-residue protein sequence, read N- to C-terminus: Cytochrome c biogenesis protein CcsB (435 aa).

3 helical membrane passes run 11–31, 69–89, and 159–179; these read LRVAIFLLLIIALSSSLGTAL, SDWFLSLLLWLGIALVFCSWR, and VGPLMVHTGLVILMLGAVWGV.

This sequence belongs to the Ccs1/CcsB family. May interact with CcsA.

The protein resides in the plastid. It is found in the organellar chromatophore thylakoid membrane. In terms of biological role, required during biogenesis of c-type cytochromes (cytochrome c6 and cytochrome f) at the step of heme attachment. The polypeptide is Cytochrome c biogenesis protein CcsB (Paulinella chromatophora).